The following is a 348-amino-acid chain: D-alanine--D-alanine ligase (348 aa).

The ATP-grasp domain occupies lysine 132–arginine 334. Glutamate 162–glutamate 217 serves as a coordination point for ATP. Residues aspartate 288, glutamate 301, and asparagine 303 each coordinate Mg(2+).

The protein belongs to the D-alanine--D-alanine ligase family. Requires Mg(2+) as cofactor. The cofactor is Mn(2+).

Its subcellular location is the cytoplasm. The enzyme catalyses 2 D-alanine + ATP = D-alanyl-D-alanine + ADP + phosphate + H(+). It functions in the pathway cell wall biogenesis; peptidoglycan biosynthesis. Functionally, cell wall formation. This Streptococcus equi subsp. zooepidemicus (strain H70) protein is D-alanine--D-alanine ligase.